Consider the following 513-residue polypeptide: ATP synthase subunit alpha (513 aa).

169–176 (GDRQTGKT) is a binding site for ATP.

It belongs to the ATPase alpha/beta chains family. As to quaternary structure, F-type ATPases have 2 components, CF(1) - the catalytic core - and CF(0) - the membrane proton channel. CF(1) has five subunits: alpha(3), beta(3), gamma(1), delta(1), epsilon(1). CF(0) has three main subunits: a(1), b(2) and c(9-12). The alpha and beta chains form an alternating ring which encloses part of the gamma chain. CF(1) is attached to CF(0) by a central stalk formed by the gamma and epsilon chains, while a peripheral stalk is formed by the delta and b chains.

The protein resides in the cell inner membrane. The enzyme catalyses ATP + H2O + 4 H(+)(in) = ADP + phosphate + 5 H(+)(out). Produces ATP from ADP in the presence of a proton gradient across the membrane. The alpha chain is a regulatory subunit. This chain is ATP synthase subunit alpha, found in Glaesserella parasuis serovar 5 (strain SH0165) (Haemophilus parasuis).